The chain runs to 341 residues: tRNA (guanine-N(7)-)-methyltransferase (341 aa).

Residues glutamate 75, glutamate 100, aspartate 127, and aspartate 150 each contribute to the S-adenosyl-L-methionine site. Aspartate 150 is an active-site residue. Residue lysine 154 coordinates substrate. An interaction with RNA region spans residues 156 to 161 (RHNKRR). Aspartate 186 is a substrate binding site.

Belongs to the class I-like SAM-binding methyltransferase superfamily. TrmB family.

The catalysed reaction is guanosine(46) in tRNA + S-adenosyl-L-methionine = N(7)-methylguanosine(46) in tRNA + S-adenosyl-L-homocysteine. It functions in the pathway tRNA modification; N(7)-methylguanine-tRNA biosynthesis. In terms of biological role, catalyzes the formation of N(7)-methylguanine at position 46 (m7G46) in tRNA. This chain is tRNA (guanine-N(7)-)-methyltransferase, found in Xanthomonas euvesicatoria pv. vesicatoria (strain 85-10) (Xanthomonas campestris pv. vesicatoria).